We begin with the raw amino-acid sequence, 404 residues long: Ubiquitin-like modifier-activating enzyme 5 (404 aa).

G83, D104, K127, N150, and N184 together coordinate ATP. Zn(2+) contacts are provided by C226 and C229. The Glycyl thioester intermediate role is filled by C250. Positions 303 and 308 each coordinate Zn(2+). The segment at 372 to 393 (APEKSSETSEETVTAATADETS) is disordered. A compositionally biased stretch (low complexity) spans 382-391 (ETVTAATADE).

It belongs to the ubiquitin-activating E1 family. UBA5 subfamily.

In terms of biological role, E1-like enzyme which activates UFM1. The sequence is that of Ubiquitin-like modifier-activating enzyme 5 from Drosophila simulans (Fruit fly).